We begin with the raw amino-acid sequence, 899 residues long: Toll-like receptor 4 (899 aa).

Residues 1-46 (MCPLQIHVLHLIQGNQKNRKGKYVNMTRQLWYILPLLFLLCHCVTS) form the signal peptide. Asparagine 25, asparagine 75, asparagine 83, and asparagine 93 each carry an N-linked (GlcNAc...) asparagine glycan. Topologically, residues 47–702 (ERRCYFSKIS…LERNCRSYTA (656 aa)) are extracellular. LRR repeat units lie at residues 83–103 (NESV…PDLP), 104–126 (RSLL…AFAR), 128–150 (QNLT…LTAG), 155–179 (LTRL…VLSD), 181–202 (VSLN…MRKI), 203–229 (HALK…YFQN), and 230–253 (VHGI…TFSY). N-linked (GlcNAc...) asparagine glycosylation is found at asparagine 129, asparagine 137, asparagine 146, and asparagine 168. Residues asparagine 237, asparagine 256, asparagine 275, and asparagine 313 are each glycosylated (N-linked (GlcNAc...) asparagine). LRR repeat units lie at residues 257 to 282 (LTHL…DLKN), 313 to 336 (NTSL…VLMY), 338 to 360 (PKTL…ALET), and 363 to 386 (LVNL…IFSN). 3 N-linked (GlcNAc...) asparagine glycosylation sites follow: asparagine 388, asparagine 432, and asparagine 463. LRR repeat units follow at residues 468 to 493 (HYPL…VFYD), 501 to 524 (LEGL…FFDY), 526 to 549 (TGLK…EKGE), 554 to 577 (LLKL…ILRN), 579 to 601 (ISLE…LKHI), 602 to 624 (KGLR…VMRE), and 631 to 654 (SSNL…HFLR). N-linked (GlcNAc...) asparagine glycosylation occurs at asparagine 516. Residues asparagine 633, asparagine 637, and asparagine 668 are each glycosylated (N-linked (GlcNAc...) asparagine). The helical transmembrane segment at 703-723 (VIVLFSCVFVILLTVIVCGVV) threads the bilayer. At 724 to 899 (YRYRWKLRYL…WRKLRDPISM (176 aa)) the chain is on the cytoplasmic side. The 142-residue stretch at 756-897 (YEFDAFISYA…IFWRKLRDPI (142 aa)) folds into the TIR domain.

It belongs to the Toll-like receptor family. Expressed in all tissues tested. The highest expression is in the hepatopancreas, with moderate expression in the gills, and low expression in the gonads, adductor muscle, hemocytes, and mantle.

It is found in the cell membrane. Functionally, may be involved in the innate immune response. The protein is Toll-like receptor 4 of Pinctada imbricata (Atlantic pearl-oyster).